Consider the following 278-residue polypeptide: HTH-type transcriptional activator RhaS (278 aa).

Residues 174-272 form the HTH araC/xylS-type domain; sequence NQLMAWLEDH…NWSPRDIRQG (99 aa). DNA-binding regions (H-T-H motif) lie at residues 191 to 212 and 239 to 262; these read EAVAEQFSLSLRTLHRQLKQHT and VTEIAYRCGFGDSNHFSTLFRREF.

Binds DNA as a dimer.

The protein resides in the cytoplasm. Activates expression of the rhaBAD and rhaT operons. The sequence is that of HTH-type transcriptional activator RhaS from Salmonella heidelberg (strain SL476).